A 93-amino-acid polypeptide reads, in one-letter code: Small ribosomal subunit protein uS19 (93 aa).

The protein belongs to the universal ribosomal protein uS19 family.

In terms of biological role, protein S19 forms a complex with S13 that binds strongly to the 16S ribosomal RNA. In Lactobacillus helveticus (strain DPC 4571), this protein is Small ribosomal subunit protein uS19.